Here is a 421-residue protein sequence, read N- to C-terminus: Serine/threonine-protein kinase OXI1 (421 aa).

Residues 17 to 329 (LEVLSLLGRG…VEEIKGHDFF (313 aa)) enclose the Protein kinase domain. ATP contacts are provided by residues 23–31 (LGRGAKGVV) and lysine 45. Aspartate 149 functions as the Proton acceptor in the catalytic mechanism. The activation loop stretch occupies residues 167–246 (DFDLSTNLAP…VGTEEYVAPE (80 aa)). Serine 235 is subject to Phosphoserine; by PDPK1. In terms of domain architecture, AGC-kinase C-terminal spans 330 to 421 (RGVDWEKVIL…LESDNNFLVF (92 aa)). A PIF motif is present at residues 418–421 (FLVF).

This sequence belongs to the protein kinase superfamily. AGC Ser/Thr protein kinase family. As to quaternary structure, interacts with PDK1 and PDK2. In terms of tissue distribution, expressed in roots and root hair cells.

The enzyme catalyses L-seryl-[protein] + ATP = O-phospho-L-seryl-[protein] + ADP + H(+). The catalysed reaction is L-threonyl-[protein] + ATP = O-phospho-L-threonyl-[protein] + ADP + H(+). Activated in response to hydrogen peroxide and cellulase elicitor. Activated by PDK1 in a phosphatidic acid dependent manner. Functionally, involved in oxidative burst-mediated signaling. Required for basal resistance to P.parasitica infection and root hair growth. Partly required for the activation of MPK3 and MPK6 by hydrogen peroxide and cellulase elicitor. The chain is Serine/threonine-protein kinase OXI1 from Arabidopsis thaliana (Mouse-ear cress).